The following is a 407-amino-acid chain: Methyltransferase/ribosomally synthesized type I borosin cyclic peptide precursor ceuMA2 (407 aa).

The interval 1–246 is methyltransferase domain; sequence MATTKTGSLT…TTSTLYIPPR (246 aa). Residues Arg70, Tyr74, and Tyr96 contribute to the active site. S-adenosyl-L-methionine is bound by residues Tyr96, His98, Val101, Ala128, Gln170, Gly208, Ser239, and Thr240. Positions 247 to 370 are clasp domain; it reads EIAPVDQRIM…GPVYKVMRAT (124 aa). Residues 371–393 form a precursor leader region; the sequence is PAAIAAGQEHSLDEIAGSADSES. N-methylthreonine occurs at positions 399 and 400. Residue Ile401 is modified to N-methylisoleucine. N-methylvaline is present on residues Val402 and Val403. Ile404 carries the N-methylisoleucine modification. N-methylvaline is present on Val405. The residue at position 406 (His406) is an N-methylhistidine.

The protein in the N-terminal section; belongs to the precorrin methyltransferase family. In terms of assembly, homodimer. Post-translationally, ceuMA2 automethylates at Thr-399, Thr-400, Ile-401, Val-402, Val-403, Ile-404, Val-405 and His-406 before being processed by a prolyloligopeptidase which likely forms a peptidyl ester upon removal of the follower propeptide, which then undergoes macrocyclization with the N-terminus of the modified core peptide. Peptide backbone alpha-N-methylations change the physicochemical properties of amide bonds to provide structural constraints and other favorable characteristics including biological membrane permeability to peptides.

The protein operates within secondary metabolite biosynthesis. Fusion protein of the methyltransferase ceuM2 and a type I borosin core peptide; part of the gene cluster that mediates the biosynthesis of a type I borosin, a highly methylated cyclic peptide with potent biological activities. Type I borosins derive from the C-terminus of the fusion protein, and it is the same protein that methylates its own C-terminus using S-adenosyl methionine (SAM). The C-terminus is subsequently cleaved off and macrocyclized by a prolyloligopeptidase to give the final product. In Cerrena unicolor (Canker rot fungus), this protein is Methyltransferase/ribosomally synthesized type I borosin cyclic peptide precursor ceuMA2.